The primary structure comprises 196 residues: uncharacterized protein (196 aa).

Positions 12–66 (LRAAREAQKMSQRELSARSGLTQSHISQIERGTMEPGLGSLVDVARALDLEIVLA) constitute an HTH cro/C1-type domain. The segment at residues 23–42 (QRELSARSGLTQSHISQIER) is a DNA-binding region (H-T-H motif). The segment at 174 to 196 (VHRDRDDAVPRSAYALDEEDDNA) is disordered.

This is an uncharacterized protein from Sinorhizobium fredii (strain NBRC 101917 / NGR234).